The primary structure comprises 52 residues: Phospholamban (52 aa).

Met1 bears the N-acetylmethionine mark. Over 1 to 31 (MEKVQYLTRSAIRRASTIEMPQQARQKLQNL) the chain is Cytoplasmic. Phosphoserine; by PKA and DMPK is present on Ser16. The tract at residues 16–22 (STIEMPQ) is involved in HAX1 binding. A Phosphothreonine; by CaMK2 modification is found at Thr17. Residues 32–52 (FINFCLILICLLLICIIVMLL) traverse the membrane as a helical segment. The S-palmitoyl cysteine moiety is linked to residue Cys36.

It belongs to the phospholamban family. In terms of assembly, homopentamer. Can also form heterooligomers with other sarcoplasmic/endoplasmic reticulum calcium ATPase (SERCA) regulators ARLN, ERLN, SLN and STRIT1/DWORF. Monomer. Interacts with HAX1. Interacts as a monomer with ATP2A2; the interaction decreases ATP2A2 Ca(2+) affinity. Interacts with VMP1; VMP1 competes with PLN and SLN to prevent them from forming an inhibitory complex with ATP2A2. Interacts with S100A1 in a Ca(2+)-dependent manner. Phosphorylation by PKA abolishes the inhibition of ATP2A2-mediated calcium uptake. Phosphorylated at Thr-17 by CaMK2, and in response to beta-adrenergic stimulation. Phosphorylation by DMPK may stimulate sarcoplasmic reticulum calcium uptake in cardiomyocytes. In terms of processing, palmitoylated by ZDHHC16, promoting formation of the homopentamer. Post-translationally, in elongated spermatids, proteolytically cleaved by SPPL2C which modulates intracellular Ca(2+) homeostasis. As to expression, heart muscle (at protein level).

The protein localises to the endoplasmic reticulum membrane. It localises to the sarcoplasmic reticulum membrane. Its subcellular location is the mitochondrion membrane. The protein resides in the membrane. In terms of biological role, reversibly inhibits the activity of ATP2A2/SERCA2 in cardiac sarcoplasmic reticulum by decreasing the apparent affinity of the ATPase for Ca(2+). Binds preferentially to the ATP-bound E1 conformational form of ATP2A2 which predominates at low Ca(2+) concentrations during the diastolic phase of the cardiac cycle. Inhibits ATP2A2 Ca(2+) affinity by disrupting its allosteric activation by ATP. Modulates the contractility of the heart muscle in response to physiological stimuli via its effects on ATP2A2. Modulates calcium re-uptake during muscle relaxation and plays an important role in calcium homeostasis in the heart muscle. The degree of ATP2A2 inhibition depends on the oligomeric state of PLN. ATP2A2 inhibition is alleviated by PLN phosphorylation. Also inhibits the activity of ATP2A3/SERCA3. Controls intracellular Ca(2+) levels in elongated spermatids and may play a role in germ cell differentiation. In the thalamic reticular nucleus of the brain, plays a role in the regulation of sleep patterns and executive functioning. The polypeptide is Phospholamban (Homo sapiens (Human)).